Here is a 717-residue protein sequence, read N- to C-terminus: MNDTEKPADTASEEEDFGDPRTYDPDFKGPVSNRSCTDVLCCMIFLLCIVGYIVLGLVAWVHGDPRRAAYPTDSQGHFCGQKGTPNENKTILFYFNLLRCTSPSVLLNLQCPTTQICVSKCPEKFLTYVEMQLLYTKDKSHWEDYRQFCKTTAKPVKSLTQLLLDDDCPTAIFPSKPFLQRCFPDFSTKNGTLTIGSQIVFQDGNGGTRSVIELRDAANGINKLLDAKSLGLKVFEDYATTWYWILIGLMIAMVLSWIFLILLRFIAGCLFWVFMIGVIGIIGYGIWHCYQQYTNLQEHPRSVLTVYDIGIQTNISMYFELQQTWFTLMIILCIIEVIVILMLIFLRNRIRVAIILLKEGSKAIGYVPSTLVYPALTFILLSICICYWVVTAVFLATSGVPVYKVIAPEGHCIHENQTCDPEIFNTTEIAKACPGALCNFAFYGGKSLYHQYIPTFHVYNLFVFLWLINFVIALGQCALAGAFATYYWAMKKPDDIPRYPLFTAFGRAIRYHTGSLAFGSLIIALIQMFKIVLEYLNHRLKRTENTLSKFLQCCLRCCFWCLENAIKFLNRNAYIMIAIYGRNFCRSAKDAFNLLMRNVLKVAVTDEVTYFVLFLGKILVAGSIGVLAFLFFTQRLPVIAQGPASLNYYWVPLLTVILGSYLIAHGFFSVYAMCVETIFICFLEDLERNDGSTARPYYVSQPLLKIFQEENLQTKQQ.

The segment at 1–24 (MNDTEKPADTASEEEDFGDPRTYD) is disordered. Residues 1-38 (MNDTEKPADTASEEEDFGDPRTYDPDFKGPVSNRSCTD) are Cytoplasmic-facing. Residues 39–59 (VLCCMIFLLCIVGYIVLGLVA) traverse the membrane as a helical segment. Over 60 to 242 (WVHGDPRRAA…KVFEDYATTW (183 aa)) the chain is Extracellular. N-linked (GlcNAc...) asparagine glycans are attached at residues asparagine 88 and asparagine 190. Residues 243–263 (YWILIGLMIAMVLSWIFLILL) form a helical membrane-spanning segment. The Cytoplasmic segment spans residues 264-265 (RF). A helical transmembrane segment spans residues 266-286 (IAGCLFWVFMIGVIGIIGYGI). The Extracellular segment spans residues 287–325 (WHCYQQYTNLQEHPRSVLTVYDIGIQTNISMYFELQQTW). N-linked (GlcNAc...) asparagine glycosylation is present at asparagine 314. A helical transmembrane segment spans residues 326 to 346 (FTLMIILCIIEVIVILMLIFL). At 347 to 351 (RNRIR) the chain is on the cytoplasmic side. Residues 352–372 (VAIILLKEGSKAIGYVPSTLV) traverse the membrane as a helical segment. Residues 373–374 (YP) lie on the Extracellular side of the membrane. A helical transmembrane segment spans residues 375–395 (ALTFILLSICICYWVVTAVFL). The Cytoplasmic portion of the chain corresponds to 396–460 (ATSGVPVYKV…QYIPTFHVYN (65 aa)). Residues 461–481 (LFVFLWLINFVIALGQCALAG) form a helical membrane-spanning segment. Over 482 to 515 (AFATYYWAMKKPDDIPRYPLFTAFGRAIRYHTGS) the chain is Extracellular. A helical transmembrane segment spans residues 516 to 536 (LAFGSLIIALIQMFKIVLEYL). At 537–610 (NHRLKRTENT…KVAVTDEVTY (74 aa)) the chain is on the cytoplasmic side. A helical transmembrane segment spans residues 611-631 (FVLFLGKILVAGSIGVLAFLF). Topologically, residues 632 to 649 (FTQRLPVIAQGPASLNYY) are extracellular. Residues 650–670 (WVPLLTVILGSYLIAHGFFSV) form a helical membrane-spanning segment. Over 671 to 717 (YAMCVETIFICFLEDLERNDGSTARPYYVSQPLLKIFQEENLQTKQQ) the chain is Cytoplasmic.

The protein belongs to the CTL (choline transporter-like) family.

Its subcellular location is the cell membrane. It carries out the reaction choline(out) + n H(+)(in) = choline(in) + n H(+)(out). Functionally, choline/H+ antiporter. The chain is Choline transporter-like protein 5 (SLC44A5) from Macaca fascicularis (Crab-eating macaque).